A 1368-amino-acid chain; its full sequence is DNA-directed RNA polymerase subunit beta (1368 aa).

This sequence belongs to the RNA polymerase beta chain family. The RNAP catalytic core consists of 2 alpha, 1 beta, 1 beta' and 1 omega subunit. When a sigma factor is associated with the core the holoenzyme is formed, which can initiate transcription.

The catalysed reaction is RNA(n) + a ribonucleoside 5'-triphosphate = RNA(n+1) + diphosphate. In terms of biological role, DNA-dependent RNA polymerase catalyzes the transcription of DNA into RNA using the four ribonucleoside triphosphates as substrates. The protein is DNA-directed RNA polymerase subunit beta of Cupriavidus pinatubonensis (strain JMP 134 / LMG 1197) (Cupriavidus necator (strain JMP 134)).